Reading from the N-terminus, the 156-residue chain is Small ribosomal subunit protein uS7 (156 aa).

The protein belongs to the universal ribosomal protein uS7 family. In terms of assembly, part of the 30S ribosomal subunit. Contacts proteins S9 and S11.

Its function is as follows. One of the primary rRNA binding proteins, it binds directly to 16S rRNA where it nucleates assembly of the head domain of the 30S subunit. Is located at the subunit interface close to the decoding center, probably blocks exit of the E-site tRNA. The chain is Small ribosomal subunit protein uS7 from Idiomarina loihiensis (strain ATCC BAA-735 / DSM 15497 / L2-TR).